Here is a 359-residue protein sequence, read N- to C-terminus: Adenosine deaminase (359 aa).

Residues histidine 15 and histidine 17 each coordinate Zn(2+). 3 residues coordinate substrate: histidine 17, aspartate 19, and glycine 184. Residue histidine 213 coordinates Zn(2+). Glutamate 216 functions as the Proton donor in the catalytic mechanism. A Zn(2+)-binding site is contributed by aspartate 295. Residue aspartate 296 coordinates substrate.

The protein belongs to the metallo-dependent hydrolases superfamily. Adenosine and AMP deaminases family. Requires Zn(2+) as cofactor.

The protein resides in the cell membrane. Its subcellular location is the cell junction. It localises to the cytoplasmic vesicle lumen. The protein localises to the cytoplasm. It is found in the lysosome. It carries out the reaction adenosine + H2O + H(+) = inosine + NH4(+). The catalysed reaction is 2'-deoxyadenosine + H2O + H(+) = 2'-deoxyinosine + NH4(+). Its function is as follows. Catalyzes the hydrolytic deamination of adenosine and 2-deoxyadenosine. Plays an important role in purine metabolism and in adenosine homeostasis. Modulates signaling by extracellular adenosine, and so contributes indirectly to cellular signaling events. May act as a positive regulator of T-cell coactivation. This Danio rerio (Zebrafish) protein is Adenosine deaminase (ada).